We begin with the raw amino-acid sequence, 719 residues long: DNA ligase (719 aa).

NAD(+) contacts are provided by residues 42-46 (DAAYD), 92-93 (SL), and Glu-126. Lys-128 (N6-AMP-lysine intermediate) is an active-site residue. Arg-149, Glu-185, Lys-301, and Lys-325 together coordinate NAD(+). The Zn(2+) site is built by Cys-430, Cys-433, Cys-448, and Cys-454. The region spanning 640 to 719 (ATGSPVEGKT…DDWFKLVGED (80 aa)) is the BRCT domain.

The protein belongs to the NAD-dependent DNA ligase family. LigA subfamily. The cofactor is Mg(2+). Mn(2+) serves as cofactor.

It carries out the reaction NAD(+) + (deoxyribonucleotide)n-3'-hydroxyl + 5'-phospho-(deoxyribonucleotide)m = (deoxyribonucleotide)n+m + AMP + beta-nicotinamide D-nucleotide.. Its function is as follows. DNA ligase that catalyzes the formation of phosphodiester linkages between 5'-phosphoryl and 3'-hydroxyl groups in double-stranded DNA using NAD as a coenzyme and as the energy source for the reaction. It is essential for DNA replication and repair of damaged DNA. The sequence is that of DNA ligase from Brucella melitensis biotype 2 (strain ATCC 23457).